We begin with the raw amino-acid sequence, 214 residues long: Probable nicotinate-nucleotide adenylyltransferase (214 aa).

The protein belongs to the NadD family.

It carries out the reaction nicotinate beta-D-ribonucleotide + ATP + H(+) = deamido-NAD(+) + diphosphate. It functions in the pathway cofactor biosynthesis; NAD(+) biosynthesis; deamido-NAD(+) from nicotinate D-ribonucleotide: step 1/1. Functionally, catalyzes the reversible adenylation of nicotinate mononucleotide (NaMN) to nicotinic acid adenine dinucleotide (NaAD). This chain is Probable nicotinate-nucleotide adenylyltransferase, found in Pseudomonas paraeruginosa (strain DSM 24068 / PA7) (Pseudomonas aeruginosa (strain PA7)).